Here is a 151-residue protein sequence, read N- to C-terminus: Secreted RxLR effector protein 30 (151 aa).

The signal sequence occupies residues 1-19 (MRSSTILIVLGIAILAVNG). A RxLR-dEER motif is present at residues 38-53 (RLLRSTSTEHETDEER).

It belongs to the RxLR effector family.

It is found in the secreted. Its subcellular location is the host nucleus. In terms of biological role, effector that acts as a broad suppressor of cell death to interrupt plant immunity. Inhibits cell death induced by cell death-inducing proteins, including the PAMP elicitor INF1 from P.infestans. The chain is Secreted RxLR effector protein 30 from Plasmopara viticola (Downy mildew of grapevine).